Consider the following 1037-residue polypeptide: Tyrosine-protein kinase-like otk (1037 aa).

Residues 1 to 22 (MAALRISVWILVQALMMALVSS) form the signal peptide. N-linked (GlcNAc...) asparagine glycosylation is found at asparagine 23 and asparagine 39. Over 23–582 (NSSHFLQLPQ…GGDGFLVTRA (560 aa)) the chain is Extracellular. Ig-like C2-type domains follow at residues 25 to 115 (SHFL…AKLS), 114 to 200 (LSVI…RVMS), 252 to 366 (PEDL…APIN), 369 to 464 (PGTL…VAIN), and 469 to 559 (PKFS…VQLV). Cystine bridges form between cysteine 46-cysteine 96, cysteine 138-cysteine 189, cysteine 277-cysteine 355, and cysteine 400-cysteine 448. 7 N-linked (GlcNAc...) asparagine glycosylation sites follow: asparagine 337, asparagine 418, asparagine 430, asparagine 445, asparagine 458, asparagine 513, and asparagine 525. A disulfide bridge connects residues cysteine 491 and cysteine 543. A helical membrane pass occupies residues 583–603 (VLITMTVALAYIVLVVGLMLW). At 604 to 1037 (CRYRRQARKA…LSKAMQSLEK (434 aa)) the chain is on the cytoplasmic side. Disordered stretches follow at residues 618-681 (LSTK…KKSA) and 719-764 (ATGS…KTSM). The span at 653–675 (QSRSKSNGDAQKSDDTACSQQSR) shows a compositional bias: polar residues. Position 680 is a phosphoserine (serine 680). Residues 694–1035 (LTELIQIGRG…AALSKAMQSL (342 aa)) enclose the Protein kinase; inactive domain. Over residues 724–735 (SDKDADTEKQHS) the composition is skewed to basic and acidic residues.

This sequence belongs to the protein kinase superfamily. Tyr protein kinase family. Insulin receptor subfamily. As to quaternary structure, interacts with plexA; component of a receptor complex that mediates the repulsive signaling in response to Semaphorin ligands.

The protein resides in the cell membrane. Functionally, acts as a calcium-dependent, homophilic cell adhesion molecule that regulates neural recognition during the development of the nervous system. Component of the repulsive Plexin signaling response to regulate motor axon guidance at the embryonic stage. Also component of a receptor complex that is required in the adult visual system to innervate the lamina layer; specific targeting of R1-R6 axons. In Drosophila ananassae (Fruit fly), this protein is Tyrosine-protein kinase-like otk.